We begin with the raw amino-acid sequence, 150 residues long: Protein Smg homolog (150 aa).

This sequence belongs to the Smg family.

This Methylobacillus flagellatus (strain ATCC 51484 / DSM 6875 / VKM B-1610 / KT) protein is Protein Smg homolog.